The following is a 1036-amino-acid chain: uncharacterized protein (1036 aa).

Helical transmembrane passes span Tyr4–Leu24 and Ile1004–Leu1024.

Belongs to the MG414/MG415 family.

It localises to the cell membrane. This is an uncharacterized protein from Mycoplasma genitalium (strain ATCC 33530 / DSM 19775 / NCTC 10195 / G37) (Mycoplasmoides genitalium).